Here is a 151-residue protein sequence, read N- to C-terminus: NADPH-dependent 7-cyano-7-deazaguanine reductase (151 aa).

Residue C51 is the Thioimide intermediate of the active site. The Proton donor role is filled by D58. Substrate-binding positions include 73–75 (VES) and 92–93 (HE).

Belongs to the GTP cyclohydrolase I family. QueF type 1 subfamily.

The protein resides in the cytoplasm. It carries out the reaction 7-aminomethyl-7-carbaguanine + 2 NADP(+) = 7-cyano-7-deazaguanine + 2 NADPH + 3 H(+). The protein operates within tRNA modification; tRNA-queuosine biosynthesis. Its function is as follows. Catalyzes the NADPH-dependent reduction of 7-cyano-7-deazaguanine (preQ0) to 7-aminomethyl-7-deazaguanine (preQ1). The polypeptide is NADPH-dependent 7-cyano-7-deazaguanine reductase (Bacteroides fragilis (strain ATCC 25285 / DSM 2151 / CCUG 4856 / JCM 11019 / LMG 10263 / NCTC 9343 / Onslow / VPI 2553 / EN-2)).